A 355-amino-acid polypeptide reads, in one-letter code: Erythronate-4-phosphate dehydrogenase (355 aa).

Positions 45 and 66 each coordinate substrate. Asp-146 provides a ligand contact to NAD(+). The active site involves Arg-206. Asp-229 is a binding site for NAD(+). The active site involves Glu-234. His-251 serves as the catalytic Proton donor. Gly-254 lines the NAD(+) pocket. A substrate-binding site is contributed by Tyr-255.

It belongs to the D-isomer specific 2-hydroxyacid dehydrogenase family. PdxB subfamily. In terms of assembly, homodimer.

It localises to the cytoplasm. It carries out the reaction 4-phospho-D-erythronate + NAD(+) = (R)-3-hydroxy-2-oxo-4-phosphooxybutanoate + NADH + H(+). It functions in the pathway cofactor biosynthesis; pyridoxine 5'-phosphate biosynthesis; pyridoxine 5'-phosphate from D-erythrose 4-phosphate: step 2/5. In terms of biological role, catalyzes the oxidation of erythronate-4-phosphate to 3-hydroxy-2-oxo-4-phosphonooxybutanoate. In Acinetobacter baumannii (strain AB307-0294), this protein is Erythronate-4-phosphate dehydrogenase.